An 80-amino-acid chain; its full sequence is Conotoxin SIVB (80 aa).

The first 21 residues, 1–21 (MGMRMMFTVFLSVVLATTVVS), serve as a signal peptide directing secretion. Residues 22-38 (TPSDRASDGRNAAVHER) constitute a propeptide that is removed on maturation. Gln39 is modified (pyrrolidone carboxylic acid). Ser45 carries an O-linked (HexNAc...) serine glycan. 6 positions are modified to 4-hydroxyproline: Pro55, Pro60, Pro61, Pro69, Pro72, and Pro75. Pro75 bears the Proline amide mark. A propeptide spanning residues 76-80 (GRRND) is cleaved from the precursor.

The protein belongs to the conotoxin A superfamily. Post-translationally, contains 3 disulfide bonds. In terms of processing, O-linked glycan consists of Hex3-HexNAc2 pentasaccharide. In terms of tissue distribution, expressed by the venom duct.

It is found in the secreted. In terms of biological role, neurotoxin with probable activity on sodium channel. Induces intense repetitive firing of the frog neuromuscular junction, leading to a tetanic contracture in muscle fiber (spastic paralysis). In vivo, shows the same effect as the whole venom when injected on fish prey. The sequence is that of Conotoxin SIVB from Conus striatus (Striated cone).